The following is a 596-amino-acid chain: Aspartate--tRNA(Asp/Asn) ligase (596 aa).

Residue Glu175 participates in L-aspartate binding. The tract at residues 199–202 (QQYK) is aspartate. Residues Arg221 and His454 each contribute to the L-aspartate site. 221-223 (RDE) contributes to the ATP binding site. Position 488 (Glu488) interacts with ATP. Arg495 is an L-aspartate binding site. An ATP-binding site is contributed by 540 to 543 (GIDR).

Belongs to the class-II aminoacyl-tRNA synthetase family. Type 1 subfamily. Homodimer.

It localises to the cytoplasm. The catalysed reaction is tRNA(Asx) + L-aspartate + ATP = L-aspartyl-tRNA(Asx) + AMP + diphosphate. In terms of biological role, aspartyl-tRNA synthetase with relaxed tRNA specificity since it is able to aspartylate not only its cognate tRNA(Asp) but also tRNA(Asn). Reaction proceeds in two steps: L-aspartate is first activated by ATP to form Asp-AMP and then transferred to the acceptor end of tRNA(Asp/Asn). This Rhizobium rhizogenes (strain K84 / ATCC BAA-868) (Agrobacterium radiobacter) protein is Aspartate--tRNA(Asp/Asn) ligase.